The following is a 369-amino-acid chain: Probable N-acetyltransferase 16 (369 aa).

The interval Met1–Glu49 is disordered. Residues Pro15 to Glu26 are compositionally biased toward basic and acidic residues. The N-acetyltransferase domain occupies Leu53 to Ala188.

Its function is as follows. Probable N-acetyltransferase. Shows only trace activity toward L-His and no N-acetyltransferase activity toward other amino acids. The physiological substrate of this enzyme is unknown. This Homo sapiens (Human) protein is Probable N-acetyltransferase 16 (NAT16).